The chain runs to 306 residues: Methionyl-tRNA formyltransferase (306 aa).

105–108 serves as a coordination point for (6S)-5,6,7,8-tetrahydrofolate; sequence SLLP.

This sequence belongs to the Fmt family.

It catalyses the reaction L-methionyl-tRNA(fMet) + (6R)-10-formyltetrahydrofolate = N-formyl-L-methionyl-tRNA(fMet) + (6S)-5,6,7,8-tetrahydrofolate + H(+). Functionally, attaches a formyl group to the free amino group of methionyl-tRNA(fMet). The formyl group appears to play a dual role in the initiator identity of N-formylmethionyl-tRNA by promoting its recognition by IF2 and preventing the misappropriation of this tRNA by the elongation apparatus. This chain is Methionyl-tRNA formyltransferase, found in Rubrobacter xylanophilus (strain DSM 9941 / JCM 11954 / NBRC 16129 / PRD-1).